The primary structure comprises 331 residues: MKKNYYALAYYYLTRVDNPQLEIALHKELFKDLDVSCRIYISEQGINGQFSGYQPDAEHYMNWLRQRPGFSNVKFKIHHIEENIFPRVTVKYRKELVALGCDVDLTTQGKHISPKEWHEKLKENRCLVLDVRNNYEWKIGHFENAVLPDIQTFREFPEYAERLSKEHDPATTPVMMYCTGGIRCELYSSLLLEKGFKEVYQLDGGVIAYGQAVGTGKWRGKLFVFDDRLAVPIDETDTDVAPIAQCSHCGVGCDTYYNCANTDCNNLFICCEDCIDSTKGCCSQECSQAPRIRAFSPSRGNKPFRRMHLCEQVECEQVEKKASSCCCSCSH.

The Rhodanese domain occupies 122 to 218 (KENRCLVLDV…YGQAVGTGKW (97 aa)). Cysteine 178 acts as the Cysteine persulfide intermediate in catalysis.

Belongs to the TrhO family.

It catalyses the reaction uridine(34) in tRNA + AH2 + O2 = 5-hydroxyuridine(34) in tRNA + A + H2O. Its function is as follows. Catalyzes oxygen-dependent 5-hydroxyuridine (ho5U) modification at position 34 in tRNAs. The chain is tRNA uridine(34) hydroxylase from Chlamydia caviae (strain ATCC VR-813 / DSM 19441 / 03DC25 / GPIC) (Chlamydophila caviae).